Consider the following 273-residue polypeptide: MAIHLYKTSTPSTRKGAVDSQVKSNPRTNLIYGQHRCGKGRNARGIITARHRGGGHKRLYRKIDFRRNEKDISGRIVTIEYDPNRNAYICLIHYGDGEKRYILHPRGAIIGDTIVSGTEVPISMGNALPLTDMPLGTAIHNIEITLGKGGQLARAAGAVAKLIAKEGKSATLRLPSGEVRLISKNCSATVGQVGNVGVNQKSLGRAGSKCWLGKRPVVRGVVMNPVDHPHGGGEGRAPIGRKKPTTPWGYPALGRRSRKRNKYSDIFILRRRK.

Disordered stretches follow at residues 1-20 (MAIH…AVDS) and 224-254 (NPVD…PALG).

Belongs to the universal ribosomal protein uL2 family. In terms of assembly, part of the 50S ribosomal subunit.

Its subcellular location is the plastid. It localises to the chloroplast. The protein is Large ribosomal subunit protein uL2cz/uL2cy (rpl2-A) of Nuphar advena (Common spatterdock).